Consider the following 409-residue polypeptide: Argininosuccinate synthase (409 aa).

Residues 10–18 (AYSGGLDTS) and Ala37 contribute to the ATP site. L-citrulline contacts are provided by Tyr90 and Ser95. Gly120 contacts ATP. L-aspartate-binding residues include Thr122, Asn126, and Asp127. Asn126 provides a ligand contact to L-citrulline. 5 residues coordinate L-citrulline: Arg130, Ser182, Ser191, Glu267, and Tyr279.

The protein belongs to the argininosuccinate synthase family. Type 1 subfamily. Homotetramer.

The protein localises to the cytoplasm. It carries out the reaction L-citrulline + L-aspartate + ATP = 2-(N(omega)-L-arginino)succinate + AMP + diphosphate + H(+). Its pathway is amino-acid biosynthesis; L-arginine biosynthesis; L-arginine from L-ornithine and carbamoyl phosphate: step 2/3. The protein is Argininosuccinate synthase of Aromatoleum aromaticum (strain DSM 19018 / LMG 30748 / EbN1) (Azoarcus sp. (strain EbN1)).